A 360-amino-acid chain; its full sequence is G-protein coupled receptor 15 (360 aa).

The Extracellular segment spans residues 1–33 (MEPATALLIVDYYDYTSPDPPFLETPSHLSYTS). The helical transmembrane segment at 34–54 (VFLPIFYTVVFLTGVVGNFIL) threads the bilayer. The Cytoplasmic segment spans residues 55-69 (MIALHFKRGNRRLID). Residues 70 to 90 (IFIINLAASDFIFLVTVPLWM) traverse the membrane as a helical segment. Over 91 to 120 (DKEASLGLWRTGSFLCKGSSYVISVNMHCS) the chain is Extracellular. The chain crosses the membrane as a helical span at residues 121–141 (VFLLTCMSMDRYLAIMHPALA). The Cytoplasmic segment spans residues 142–149 (KRLRRRSS). Residues 150–170 (AYAVCAVVWIISCVLGLPTLL) traverse the membrane as a helical segment. Residues 171–192 (SRELTHIEGKPYCAEKKPTSLK) are Extracellular-facing. A helical membrane pass occupies residues 193–213 (LMWGLVALITTFFVPLLSIVT). The Cytoplasmic portion of the chain corresponds to 214 to 239 (CYCCITRRLCAHYQQSGKHNKKLKKS). Residues 240–260 (IKIVIIAVAAFTVSWVPFNTF) traverse the membrane as a helical segment. Over 261 to 284 (KLLAIVSGFQPEGLFHSEALQLAM) the chain is Extracellular. A helical transmembrane segment spans residues 285–305 (NVTGPLAFASSCVNPLIYYVF). The Cytoplasmic segment spans residues 306 to 360 (DSYIRRAIVRCLCPCLKTHNFGSSTETSDSHLTKALSNFIHAEDFIRRRKRSVSL). Residue Ser-359 is modified to Phosphoserine.

This sequence belongs to the G-protein coupled receptor 1 family. Interacts with adapter YWHAE; this interaction promotes ER-to-Golgi transport of GPR15. Post-translationally, phosphorylation is necessary for YWHAE binding and efficient surface expression. O-glycosylated. Sialylated O-glycans in the N-terminal tail inhibits binding of GPR15LG. In terms of processing, sulfation is required for efficient binding of GPR15LG. In terms of tissue distribution, highly expressed in gut tissues and lymphoid organs, largely restricted to TCRbeta+ cells. Expressed in fetal thymic dendritic epidermal T-cell precursors.

The protein localises to the cell membrane. Functionally, g protein-coupled receptor that plays an important role in immune homeostasis. Acts via its natural ligand GPR15LG, a chemokine-like polypeptide strongly expressed in gastrointestinal tissues. GPR15-GPR15LG signaling axis regulates intestinal homeostasis and inflammation through the migration of immune cells. Controls thereby the specific homing of T-cells, particularly FOXP3+ regulatory T-cells (Tregs), to the large intestine lamina propria. Also required for skin localization of thymus-derived dendritic epidermal T-cells. Plays an important role in mediating cytoprotective function as well as angiogenesis of thrombomodulin. Mechanistically, preferentially signals through the Gi/o pathway to inhibit adenylate cyclase activity and activate a phosphatidylinositol-calcium second messenger system that regulates the release of Ca(2+) ions from intracellular stores. This Mus musculus (Mouse) protein is G-protein coupled receptor 15 (Gpr15).